The following is a 286-amino-acid chain: MYVTNNTALAGGAYRKRKKKFQRPKPRKRARKSKKPPKSENTYVQRFWKNPPRNYILKEPTKPISSYARWIPPEIVDVNNITVNIPNTITASRLPKTEFQETEVFKDARDQWYFPIRPSDGEHDTDVKVKKKWSLDTVLQFLQSSPKHIRQLLLTSLFGSLLGLILDTLFGGPWNLTSRLLRLIISVVPGGRILLTALDGLGYFLGNSANPIHLIENPMMQAFGNSIQKQISPRLAEDIIKAADEQIGGGFMRTIASILSAAASAGTHFTMALPAIPIAAVRPFMR.

Residues 1-12 constitute a propeptide, removed in mature form; sequence MYVTNNTALAGG. Residues 1–41 are disordered; that stretch reads MYVTNNTALAGGAYRKRKKKFQRPKPRKRARKSKKPPKSEN. Positions 14–36 are enriched in basic residues; sequence YRKRKKKFQRPKPRKRARKSKKP.

This sequence belongs to the atadenoviridae p32K protein family.

The protein localises to the virion. In Ovine adenovirus D serotype 7 (isolate OAV287) (OAdV-7), this protein is Structural protein p32K.